The following is a 220-amino-acid chain: Deoxyribose-phosphate aldolase (220 aa).

The active-site Proton donor/acceptor is the Asp89. The active-site Schiff-base intermediate with acetaldehyde is the Lys151. Lys180 acts as the Proton donor/acceptor in catalysis.

Belongs to the DeoC/FbaB aldolase family. DeoC type 1 subfamily.

The protein resides in the cytoplasm. It carries out the reaction 2-deoxy-D-ribose 5-phosphate = D-glyceraldehyde 3-phosphate + acetaldehyde. The protein operates within carbohydrate degradation; 2-deoxy-D-ribose 1-phosphate degradation; D-glyceraldehyde 3-phosphate and acetaldehyde from 2-deoxy-alpha-D-ribose 1-phosphate: step 2/2. Catalyzes a reversible aldol reaction between acetaldehyde and D-glyceraldehyde 3-phosphate to generate 2-deoxy-D-ribose 5-phosphate. This chain is Deoxyribose-phosphate aldolase, found in Streptococcus pneumoniae serotype 19F (strain G54).